Reading from the N-terminus, the 382-residue chain is 4-hydroxy-3-methylbut-2-en-1-yl diphosphate synthase (flavodoxin) (382 aa).

Residues C290, C293, C327, and E334 each contribute to the [4Fe-4S] cluster site.

Belongs to the IspG family. Requires [4Fe-4S] cluster as cofactor.

The catalysed reaction is (2E)-4-hydroxy-3-methylbut-2-enyl diphosphate + oxidized [flavodoxin] + H2O + 2 H(+) = 2-C-methyl-D-erythritol 2,4-cyclic diphosphate + reduced [flavodoxin]. It functions in the pathway isoprenoid biosynthesis; isopentenyl diphosphate biosynthesis via DXP pathway; isopentenyl diphosphate from 1-deoxy-D-xylulose 5-phosphate: step 5/6. Its function is as follows. Converts 2C-methyl-D-erythritol 2,4-cyclodiphosphate (ME-2,4cPP) into 1-hydroxy-2-methyl-2-(E)-butenyl 4-diphosphate. The protein is 4-hydroxy-3-methylbut-2-en-1-yl diphosphate synthase (flavodoxin) of Rhodopirellula baltica (strain DSM 10527 / NCIMB 13988 / SH1).